Reading from the N-terminus, the 847-residue chain is DNA ligase (847 aa).

Over residues 1 to 22 the composition is skewed to low complexity; it reads MSDTTTGSDAADAAVPATTPAD. The tract at residues 1–23 is disordered; the sequence is MSDTTTGSDAADAAVPATTPADL. Residues 54 to 58, 104 to 105, and E135 contribute to the NAD(+) site; these read DAEYD and SL. The active-site N6-AMP-lysine intermediate is K137. Residues R158, E195, K326, and K350 each contribute to the NAD(+) site. C444, C447, C463, and C469 together coordinate Zn(2+). Residues 686 to 775 enclose the BRCT domain; that stretch reads AAGGVLAGLA…PDAIALPEAD (90 aa). Residues 770–847 form a disordered region; it reads ALPEADPVPD…AEPDGPAETP (78 aa). 2 stretches are compositionally biased toward low complexity: residues 786–807 and 819–833; these read DGGS…ATAE and PAAA…VEAG.

Belongs to the NAD-dependent DNA ligase family. LigA subfamily. Mg(2+) serves as cofactor. Mn(2+) is required as a cofactor.

It catalyses the reaction NAD(+) + (deoxyribonucleotide)n-3'-hydroxyl + 5'-phospho-(deoxyribonucleotide)m = (deoxyribonucleotide)n+m + AMP + beta-nicotinamide D-nucleotide.. In terms of biological role, DNA ligase that catalyzes the formation of phosphodiester linkages between 5'-phosphoryl and 3'-hydroxyl groups in double-stranded DNA using NAD as a coenzyme and as the energy source for the reaction. It is essential for DNA replication and repair of damaged DNA. The protein is DNA ligase of Clavibacter sepedonicus (Clavibacter michiganensis subsp. sepedonicus).